We begin with the raw amino-acid sequence, 165 residues long: Austinoid biosynthesis cluster protein J (165 aa).

The protein belongs to the trt14 isomerase family. As to quaternary structure, homodimer.

Its pathway is secondary metabolite biosynthesis; terpenoid biosynthesis. In terms of biological role, part of the gene cluster that mediates the biosynthesis of calidodehydroaustin, a fungal meroterpenoid. The first step of the pathway is the synthesis of 3,5-dimethylorsellinic acid by the polyketide synthase ausA. 3,5-dimethylorsellinic acid is then prenylated by the polyprenyl transferase ausN. Further epoxidation by the FAD-dependent monooxygenase ausM and cyclization by the probable terpene cyclase ausL lead to the formation of protoaustinoid A. Protoaustinoid A is then oxidized to spiro-lactone preaustinoid A3 by the combined action of the FAD-binding monooxygenases ausB and ausC, and the dioxygenase ausE. Acid-catalyzed keto-rearrangement and ring contraction of the tetraketide portion of preaustinoid A3 by ausJ lead to the formation of preaustinoid A4. The aldo-keto reductase ausK, with the help of ausH, is involved in the next step by transforming preaustinoid A4 into isoaustinone which is in turn hydroxylated by the P450 monooxygenase ausI to form austinolide. The cytochrome P450 monooxygenase ausG modifies austinolide to austinol. Austinol is further acetylated to austin by the O-acetyltransferase ausP, which spontaneously changes to dehydroaustin. The cytochrome P450 monooxygenase ausR then converts dehydroaustin is into 7-dehydrodehydroaustin. The hydroxylation catalyzed by ausR permits the O-acetyltransferase ausQ to add an additional acetyl group to the molecule, leading to the formation of acetoxydehydroaustin. The short chain dehydrogenase ausT catalyzes the reduction of the double bond present between carbon atoms 1 and 2 to convert 7-dehydrodehydroaustin into 1,2-dihydro-7-hydroxydehydroaustin. AusQ catalyzes not only an acetylation reaction but also the addition of the PKS ausV diketide product to 1,2-dihydro-7-hydroxydehydroaustin, forming precalidodehydroaustin. Finally, the iron/alpha-ketoglutarate-dependent dioxygenase converts precalidodehydroaustin into calidodehydroaustin. In Aspergillus calidoustus, this protein is Austinoid biosynthesis cluster protein J.